Reading from the N-terminus, the 255-residue chain is PHD finger protein ALFIN-LIKE 4 (255 aa).

Methionine 1 carries the N-acetylmethionine modification. Residues 145 to 200 form a disordered region; that stretch reads GKDKSSVSNNSSNRSKSSSKRGSESRAKFSKPEPKDDEEEEEEGVEEEDEDEQGET. Over residues 150-160 the composition is skewed to low complexity; sequence SVSNNSSNRSK. Residues 165 to 178 are compositionally biased toward basic and acidic residues; it reads RGSESRAKFSKPEP. The segment covering 179 to 198 has biased composition (acidic residues); the sequence is KDDEEEEEEGVEEEDEDEQG. Residues 199 to 251 form a PHD-type zinc finger; that stretch reads ETQCGACGESYAADEFWICCDLCEMWFHGKCVKITPARAEHIKQYKCPSCSNK.

The protein belongs to the Alfin family. As to quaternary structure, interacts with H3K4me3 and to a lesser extent with H3K4me2. Ubiquitously expressed.

The protein localises to the nucleus. Histone-binding component that specifically recognizes H3 tails trimethylated on 'Lys-4' (H3K4me3), which mark transcription start sites of virtually all active genes. The polypeptide is PHD finger protein ALFIN-LIKE 4 (AL4) (Arabidopsis thaliana (Mouse-ear cress)).